A 169-amino-acid chain; its full sequence is Cell division inhibitor SulA (169 aa).

The segment at 106–112 is ftsZ binding; it reads ALRTGNY. Positions 162–169 are lon protease binding; sequence KIHSNLYH.

It belongs to the SulA family. As to quaternary structure, interacts with FtsZ. Is rapidly cleaved and degraded by the Lon protease once DNA damage is repaired.

Functionally, component of the SOS system and an inhibitor of cell division. Accumulation of SulA causes rapid cessation of cell division and the appearance of long, non-septate filaments. In the presence of GTP, binds a polymerization-competent form of FtsZ in a 1:1 ratio, thus inhibiting FtsZ polymerization and therefore preventing it from participating in the assembly of the Z ring. This mechanism prevents the premature segregation of damaged DNA to daughter cells during cell division. The protein is Cell division inhibitor SulA of Escherichia coli O7:K1 (strain IAI39 / ExPEC).